The sequence spans 244 residues: Phosphoadenosine 5'-phosphosulfate reductase (244 aa).

The Nucleophile; cysteine thiosulfonate intermediate role is filled by Cys-239.

The protein belongs to the PAPS reductase family. CysH subfamily.

The protein resides in the cytoplasm. The catalysed reaction is [thioredoxin]-disulfide + sulfite + adenosine 3',5'-bisphosphate + 2 H(+) = [thioredoxin]-dithiol + 3'-phosphoadenylyl sulfate. It functions in the pathway sulfur metabolism; hydrogen sulfide biosynthesis; sulfite from sulfate: step 3/3. Its function is as follows. Catalyzes the formation of sulfite from phosphoadenosine 5'-phosphosulfate (PAPS) using thioredoxin as an electron donor. The protein is Phosphoadenosine 5'-phosphosulfate reductase of Salmonella newport (strain SL254).